The sequence spans 570 residues: Ferroportin (570 aa).

Residues 1-23 lie on the Cytoplasmic side of the membrane; the sequence is MTKSRDQTHQEGCCGSLANYLTS. A helical membrane pass occupies residues 24–53; the sequence is AKFLLYLGHSLSTWGDRMWHFAVSVFLVEL. Aspartate 39 and histidine 43 together coordinate Fe cation. Residues 54-57 are Extracellular-facing; sequence YGNS. A helical membrane pass occupies residues 58–84; it reads LLLTAVYGLVVAGSVLVLGAIIGDWVD. Topologically, residues 85–87 are cytoplasmic; the sequence is KNA. Residues 88–118 traverse the membrane as a helical segment; that stretch reads RLKVAQTSLVVQNVSVILCGIILMMVFLHKN. At 119-126 the chain is on the extracellular side; that stretch reads ELLNMYHG. The helical transmembrane segment at 127–162 threads the bilayer; that stretch reads WVLTVCYILIITIANIANLASTATAITIQRDWIVVV. The Cytoplasmic segment spans residues 163–164; it reads AG. The helical transmembrane segment at 165–195 threads the bilayer; it reads ENRSRLADMNATIRRIDQLTNILAPMAVGQI. At 196 to 202 the chain is on the extracellular side; the sequence is MTFGSPV. A helical membrane pass occupies residues 203–229; that stretch reads IGCGFISGWNLVSMCVEYFLLWKVYQK. Over 230-306 the chain is Cytoplasmic; it reads TPALAVKAAL…DGWVSYYNQP (77 aa). The helical transmembrane segment at 307–333 threads the bilayer; it reads VFLAGMGLAFLYMTVLGFDCITTGYAY. Cysteine 326 contacts Fe cation. Residues 334 to 338 are Extracellular-facing; sequence TQGLS. A helical membrane pass occupies residues 339–366; sequence GSILSVLMGASAITGIMGTVAFTWLRRK. Topologically, residues 367–368 are cytoplasmic; sequence CG. The chain crosses the membrane as a helical span at residues 369 to 391; the sequence is LVRTGLFSGLAQLSCLILCVISV. At 392–452 the chain is on the extracellular side; the sequence is FMPGSPLDLS…EMSTKSVPII (61 aa). A helical membrane pass occupies residues 453-482; that stretch reads SVSLLFAGVIAARIGLWSFDLTVTQLLQEN. Residues 483–487 are Cytoplasmic-facing; it reads VIESE. A helical membrane pass occupies residues 488–512; that stretch reads RGIINGVQNSMNYLLDLLHFIMVIL. Histidine 506 provides a ligand contact to Fe cation. Residues 513–515 are Extracellular-facing; that stretch reads APN. Residues 516–541 form a helical membrane-spanning segment; the sequence is PEAFGLLVLISVSFVAMGHLMYFRFA. Topologically, residues 542–570 are cytoplasmic; the sequence is QKTLGNQIFVCAPDEKEVTDESQPNTSVV.

This sequence belongs to the ferroportin (FP) (TC 2.A.100) family. SLC40A subfamily. In terms of assembly, identified in a complex with STOM. Interacts with HAMP; affinity of the peptide hormone HAMP for SLC40A1 increases by 80-fold in the presence of iron and the interaction promotes SLC40A1 ubiquitination and degradation. Part of a complex composed of SLC40A1/ferroportin, TF/transferrin and HEPH/hephaestin that transfers iron from cells to transferrin. In terms of processing, polyubiquitinated by RNF217; leading to proteasomal degradation. Under conditions of high systemic iron levels, both the hormone peptide hepcidin/HAMP and holo(iron bound)-transferrin/TF induce the ubiquitination, internalization and proteasomal degradation of SLC40A1 to control iron release from cells.

Its subcellular location is the cell membrane. The protein resides in the basolateral cell membrane. The catalysed reaction is Fe(2+)(in) = Fe(2+)(out). During elevated serum iron levels, liver-derived hepcidin/HAMP negatively regulates cell surface SLC40A1 by inducing its ubiquitination, internalization, and degradation. Indeed, hepcidin/HAMP affinity towards ferroportin/SLC40A1 increases by 80-fold in the presence of iron. In terms of biological role, transports Fe(2+) from the inside of a cell to the outside of the cell, playing a key role for maintaining systemic iron homeostasis. Transports iron from intestinal, splenic, hepatic cells, macrophages and erythrocytes into the blood to provide iron to other tissues. Controls therefore dietary iron uptake, iron recycling by macrophages and erythrocytes, and release of iron stores in hepatocytes. When iron is in excess in serum, circulating HAMP/hepcidin levels increase resulting in a degradation of SLC40A1, thus limiting the iron efflux to plasma. In Rattus norvegicus (Rat), this protein is Ferroportin.